The sequence spans 68 residues: Antimicrobial peptide Eval655 (68 aa).

The N-terminal stretch at 1–23 is a signal peptide; the sequence is MKTQFVVLLVALVLLQMFAQSEA. Leucine 36 bears the Leucine amide mark. A propeptide spanning residues 37 to 68 is cleaved from the precursor; that stretch reads GKRGLKNLDDFDDIFDDDLSSADLEFLKQLMR.

Belongs to the non-disulfide-bridged peptide (NDBP) superfamily. Short antimicrobial peptide (group 4) family. As to expression, expressed by the venom gland.

It localises to the secreted. Its function is as follows. Probable antimicrobial peptide. Shows low inhibitory activity against herpes simplex virus type 1 (HSV-1). The protein is Antimicrobial peptide Eval655 of Euscorpiops validus (Scorpion).